A 268-amino-acid polypeptide reads, in one-letter code: Ribosomal RNA small subunit methyltransferase A (268 aa).

S-adenosyl-L-methionine is bound by residues asparagine 12, leucine 14, glycine 38, glutamate 59, aspartate 82, and asparagine 107.

It belongs to the class I-like SAM-binding methyltransferase superfamily. rRNA adenine N(6)-methyltransferase family. RsmA subfamily.

The protein localises to the cytoplasm. It catalyses the reaction adenosine(1518)/adenosine(1519) in 16S rRNA + 4 S-adenosyl-L-methionine = N(6)-dimethyladenosine(1518)/N(6)-dimethyladenosine(1519) in 16S rRNA + 4 S-adenosyl-L-homocysteine + 4 H(+). Specifically dimethylates two adjacent adenosines (A1518 and A1519) in the loop of a conserved hairpin near the 3'-end of 16S rRNA in the 30S particle. May play a critical role in biogenesis of 30S subunits. The chain is Ribosomal RNA small subunit methyltransferase A from Onion yellows phytoplasma (strain OY-M).